The following is a 212-amino-acid chain: Methylthioribulose-1-phosphate dehydratase (212 aa).

His97 and His99 together coordinate Zn(2+).

This sequence belongs to the aldolase class II family. MtnB subfamily. Homotetramer. Zn(2+) is required as a cofactor.

It carries out the reaction 5-(methylsulfanyl)-D-ribulose 1-phosphate = 5-methylsulfanyl-2,3-dioxopentyl phosphate + H2O. It participates in amino-acid biosynthesis; L-methionine biosynthesis via salvage pathway; L-methionine from S-methyl-5-thio-alpha-D-ribose 1-phosphate: step 2/6. Its function is as follows. Catalyzes the dehydration of methylthioribulose-1-phosphate (MTRu-1-P) into 2,3-diketo-5-methylthiopentyl-1-phosphate (DK-MTP-1-P). This chain is Methylthioribulose-1-phosphate dehydratase, found in Bacillus cereus (strain ATCC 10987 / NRS 248).